The following is a 392-amino-acid chain: uncharacterized protein (392 aa).

The next 10 membrane-spanning stretches (helical) occupy residues W2–I23, S38–G60, G73–L95, F153–V175, V195–T217, V237–R259, R272–A291, L297–I319, V331–I353, and F357–I379.

This sequence belongs to the major facilitator superfamily.

It is found in the cell membrane. This is an uncharacterized protein from Bacillus subtilis (strain 168).